Consider the following 143-residue polypeptide: Hemoglobin cathodic subunit alpha (143 aa).

Ser2 is modified (N-acetylserine). Residues 2–143 enclose the Globin domain; the sequence is SLTAKDKSLI…LGAALSDKYR (142 aa). O2 is bound at residue His60. His89 is a binding site for heme b.

The protein belongs to the globin family. As to quaternary structure, heterotetramer of two alpha chains and two beta chains. As to expression, red blood cells.

Involved in oxygen transport from gills to the various peripheral tissues. The sequence is that of Hemoglobin cathodic subunit alpha from Anguilla anguilla (European freshwater eel).